The following is a 156-amino-acid chain: Protein-export protein SecB (156 aa).

It belongs to the SecB family. In terms of assembly, homotetramer, a dimer of dimers. One homotetramer interacts with 1 SecA dimer.

It localises to the cytoplasm. Its function is as follows. One of the proteins required for the normal export of preproteins out of the cell cytoplasm. It is a molecular chaperone that binds to a subset of precursor proteins, maintaining them in a translocation-competent state. It also specifically binds to its receptor SecA. The chain is Protein-export protein SecB from Aeromonas hydrophila subsp. hydrophila (strain ATCC 7966 / DSM 30187 / BCRC 13018 / CCUG 14551 / JCM 1027 / KCTC 2358 / NCIMB 9240 / NCTC 8049).